The primary structure comprises 244 residues: tRNA (guanine-N(1)-)-methyltransferase (244 aa).

Residues Gly113 and 133-138 each bind S-adenosyl-L-methionine; that span reads IGDFVL.

This sequence belongs to the RNA methyltransferase TrmD family. In terms of assembly, homodimer.

The protein resides in the cytoplasm. It catalyses the reaction guanosine(37) in tRNA + S-adenosyl-L-methionine = N(1)-methylguanosine(37) in tRNA + S-adenosyl-L-homocysteine + H(+). Its function is as follows. Specifically methylates guanosine-37 in various tRNAs. The sequence is that of tRNA (guanine-N(1)-)-methyltransferase from Bacillus pumilus (strain SAFR-032).